A 227-amino-acid chain; its full sequence is Cytochrome c oxidase subunit 2 (227 aa).

The Mitochondrial intermembrane portion of the chain corresponds to 1-14 (MAYPFQLGLQDATS). A helical transmembrane segment spans residues 15–45 (PIMEELMNFHDHTLMIVFLISTLVLYIISLM). The Mitochondrial matrix segment spans residues 46 to 59 (LTTKLTHTSTMDAQ). The chain crosses the membrane as a helical span at residues 60-87 (EVETVWTILPAVILIMIALPSLRILYMM). Residues 88-227 (DEINNPVLTV…HFENWSTSMI (140 aa)) are Mitochondrial intermembrane-facing. The Cu cation site is built by His161, Cys196, Glu198, Cys200, His204, and Met207. Glu198 is a Mg(2+) binding site.

The protein belongs to the cytochrome c oxidase subunit 2 family. As to quaternary structure, component of the cytochrome c oxidase (complex IV, CIV), a multisubunit enzyme composed of 14 subunits. The complex is composed of a catalytic core of 3 subunits MT-CO1, MT-CO2 and MT-CO3, encoded in the mitochondrial DNA, and 11 supernumerary subunits COX4I, COX5A, COX5B, COX6A, COX6B, COX6C, COX7A, COX7B, COX7C, COX8 and NDUFA4, which are encoded in the nuclear genome. The complex exists as a monomer or a dimer and forms supercomplexes (SCs) in the inner mitochondrial membrane with NADH-ubiquinone oxidoreductase (complex I, CI) and ubiquinol-cytochrome c oxidoreductase (cytochrome b-c1 complex, complex III, CIII), resulting in different assemblies (supercomplex SCI(1)III(2)IV(1) and megacomplex MCI(2)III(2)IV(2)). Found in a complex with TMEM177, COA6, COX18, COX20, SCO1 and SCO2. Interacts with TMEM177 in a COX20-dependent manner. Interacts with COX20. Interacts with COX16. Requires Cu cation as cofactor.

Its subcellular location is the mitochondrion inner membrane. The catalysed reaction is 4 Fe(II)-[cytochrome c] + O2 + 8 H(+)(in) = 4 Fe(III)-[cytochrome c] + 2 H2O + 4 H(+)(out). Its function is as follows. Component of the cytochrome c oxidase, the last enzyme in the mitochondrial electron transport chain which drives oxidative phosphorylation. The respiratory chain contains 3 multisubunit complexes succinate dehydrogenase (complex II, CII), ubiquinol-cytochrome c oxidoreductase (cytochrome b-c1 complex, complex III, CIII) and cytochrome c oxidase (complex IV, CIV), that cooperate to transfer electrons derived from NADH and succinate to molecular oxygen, creating an electrochemical gradient over the inner membrane that drives transmembrane transport and the ATP synthase. Cytochrome c oxidase is the component of the respiratory chain that catalyzes the reduction of oxygen to water. Electrons originating from reduced cytochrome c in the intermembrane space (IMS) are transferred via the dinuclear copper A center (CU(A)) of subunit 2 and heme A of subunit 1 to the active site in subunit 1, a binuclear center (BNC) formed by heme A3 and copper B (CU(B)). The BNC reduces molecular oxygen to 2 water molecules using 4 electrons from cytochrome c in the IMS and 4 protons from the mitochondrial matrix. The polypeptide is Cytochrome c oxidase subunit 2 (MT-CO2) (Apodemus semotus (Taiwan field mouse)).